The sequence spans 1151 residues: MRFTRLRLNGFKSFVDPTDLVIHEGLTGVVGPNGCGKSNLLEALRWVMGENRPTAMRGAGMEDVIFAGAATRPARNFAEVALVLDNADRLAPAGFNDADTIEIVRRITRDAGSAYKANTKDVRARDIQMLFADASTGAHSPALVRQGQISELINAKPKARRRILEEAAGISGLYQRRHEAELRLAATEQNLARVEDVLDQLAQQLSTLARQAKQAARYREIGEELRRAEGSLLYRRWREADLARTEALAILRERMTAAGQAEAAARKAAGARAEAEATLPPKREEEAIAGAVLQRLTVERDTLAAEEDRARATIATLVSRVDQLGRDIEREAGLNRDAAETIGRLEWEREALETAHEGHEERLAEAAEAAREAGAALGEREEILSERTEDAARLSARHQSAQRMLVDSRTTLARSEAEAARARETVEAAAEAQERAAETWEEAAAAQEEAQERAEAAEEALVQADEARAEAQSREAEARAQRSAAEGEANALRAEVAALARLVDREAQAGSQLLDRIQVEPGFEAALGAALSDDLRAPEVAADAPSGWAALPDYDETAPLPAGAEPLAPHVGVPEVLRRRIGQIGLVGREAGAALQPLLQPGQRLVSIEGDLWRWDGFRAGAEDAPSAAALRLKQLNRLVALKRDLEEVAARAEGARQAHEALQARLAQLTRADQEAREARRAADARVTEASRAAARAEADRSISGGKLESARLAVKRYEDEAMEARARLREAEGVASALPDLEAARAGLEDLKMAVEAARIAMMSRRSLHDELRREGEARVKRRQEVTKDLSGWKHRLETAEKRSAELAERKAETEEALREAAEAPEEIAARREELAEAIEAAEERRARASDALASAEAALRAAQEAEREAERQAGESREARARAEARADAATEALQLAAERIREETERTPQQLLEALAVDPERIPTVEALETDVGRLKRQREALGAVNLRAEEDAQAVQTEHDTLKAEKTDLEEAVKKLRAGIQGLNREGRERLLTAFEQVNASFGTLFTHLFGGGEARLVMVESDDPLEAGLEIMCQPPGKKLSTLSLLSGGEQTLTALALIFAVFLANPAPICVLDEVDAPLDDANVTRFCDLLDEMTRRTETRFLIITHHAVTMARMDRLFGVTMAEQGVSQLVSVDLKRAEALVA.

32–39 lines the ATP pocket; that stretch reads PNGCGKSN. 4 coiled-coil regions span residues 170–218, 342–379, 407–508, and 633–994; these read ISGL…AARY, IGRL…ALGE, DSRT…REAQ, and LKQL…EGRE. 2 stretches are compositionally biased toward basic and acidic residues: residues 421–438 and 465–480; these read RARE…RAAE and DEAR…EARA. 3 disordered regions span residues 421 to 483, 806 to 826, and 862 to 889; these read RARE…AQRS, SAEL…AAEA, and LRAA…AEAR. A compositionally biased stretch (basic and acidic residues) spans 866-889; sequence QEAEREAERQAGESREARARAEAR.

The protein belongs to the SMC family. In terms of assembly, homodimer.

It localises to the cytoplasm. Functionally, required for chromosome condensation and partitioning. The sequence is that of Chromosome partition protein Smc from Cereibacter sphaeroides (strain ATCC 17029 / ATH 2.4.9) (Rhodobacter sphaeroides).